A 455-amino-acid chain; its full sequence is Bifunctional protein GlmU (455 aa).

A pyrophosphorylase region spans residues 1-232 (MASTTGALIL…DPNLLGVNNP (232 aa)). UDP-N-acetyl-alpha-D-glucosamine-binding positions include 10 to 13 (LAAG), Lys24, Gln75, and 80 to 81 (GT). Asp106 is a binding site for Mg(2+). Residues Gly141, Glu155, Asn172, and Asn230 each contribute to the UDP-N-acetyl-alpha-D-glucosamine site. Asn230 lines the Mg(2+) pocket. Residues 233-253 (AELIRSEALLRTRLVIGHIEG) form a linker region. Residues 254-455 (GVLIHAPETV…QTNLPRKPKA (202 aa)) are N-acetyltransferase. Arg336 and Lys354 together coordinate UDP-N-acetyl-alpha-D-glucosamine. Residue His366 is the Proton acceptor of the active site. UDP-N-acetyl-alpha-D-glucosamine is bound by residues Tyr369 and Asn380. Residues Ala383, 389–390 (NY), Ser408, Ala426, and Arg443 each bind acetyl-CoA.

It in the N-terminal section; belongs to the N-acetylglucosamine-1-phosphate uridyltransferase family. In the C-terminal section; belongs to the transferase hexapeptide repeat family. In terms of assembly, homotrimer. It depends on Mg(2+) as a cofactor.

It localises to the cytoplasm. It catalyses the reaction alpha-D-glucosamine 1-phosphate + acetyl-CoA = N-acetyl-alpha-D-glucosamine 1-phosphate + CoA + H(+). The catalysed reaction is N-acetyl-alpha-D-glucosamine 1-phosphate + UTP + H(+) = UDP-N-acetyl-alpha-D-glucosamine + diphosphate. The protein operates within nucleotide-sugar biosynthesis; UDP-N-acetyl-alpha-D-glucosamine biosynthesis; N-acetyl-alpha-D-glucosamine 1-phosphate from alpha-D-glucosamine 6-phosphate (route II): step 2/2. It functions in the pathway nucleotide-sugar biosynthesis; UDP-N-acetyl-alpha-D-glucosamine biosynthesis; UDP-N-acetyl-alpha-D-glucosamine from N-acetyl-alpha-D-glucosamine 1-phosphate: step 1/1. It participates in bacterial outer membrane biogenesis; LPS lipid A biosynthesis. Its function is as follows. Catalyzes the last two sequential reactions in the de novo biosynthetic pathway for UDP-N-acetylglucosamine (UDP-GlcNAc). The C-terminal domain catalyzes the transfer of acetyl group from acetyl coenzyme A to glucosamine-1-phosphate (GlcN-1-P) to produce N-acetylglucosamine-1-phosphate (GlcNAc-1-P), which is converted into UDP-GlcNAc by the transfer of uridine 5-monophosphate (from uridine 5-triphosphate), a reaction catalyzed by the N-terminal domain. The chain is Bifunctional protein GlmU from Nitratidesulfovibrio vulgaris (strain ATCC 29579 / DSM 644 / CCUG 34227 / NCIMB 8303 / VKM B-1760 / Hildenborough) (Desulfovibrio vulgaris).